The chain runs to 1423 residues: Interphotoreceptor matrix proteoglycan 2 (1423 aa).

An N-terminal signal peptide occupies residues 1 to 27 (MFAFLWKISLCLLVLGVITGDPQAVAA). Residues 28–1289 (EEKQAKDASP…EYVSEPLVVG (1262 aa)) are Extracellular-facing. The N-linked (GlcNAc...) asparagine glycan is linked to Asn-150. Positions 245–358 (TEQMIEFSIV…NPTVVYTISD (114 aa)) constitute an SEA 1 domain. Positions 265–273 (SDPDTAKYQ) are hyaluronan-binding motif involved in chondroitin sulfate A-binding. N-linked (GlcNAc...) asparagine glycans are attached at residues Asn-325 and Asn-375. Disordered regions lie at residues 423 to 469 (AERP…DSEV), 522 to 559 (DSSD…DYTA), and 577 to 602 (TKRT…ADSL). The segment covering 523–532 (SSDEFEDTGL) has biased composition (acidic residues). Residues 537–546 (LLPSSPSSHL) are compositionally biased toward low complexity. Residues 577-587 (TKRTVTAEKEV) are compositionally biased toward basic and acidic residues. The N-linked (GlcNAc...) asparagine glycan is linked to Asn-676. The tract at residues 886–907 (FEVSTDTSTEEQQSLDSSLADR) is disordered. The segment covering 889–902 (STDTSTEEQQSLDS) has biased composition (polar residues). The 114-residue stretch at 1083 to 1196 (RALVVFFSLR…YSLDVESGEQ (114 aa)) folds into the SEA 2 domain. N-linked (GlcNAc...) asparagine glycosylation is found at Asn-1128, Asn-1142, and Asn-1160. 2 EGF-like domains span residues 1196–1234 (QADP…IDGL) and 1237–1279 (NSIC…EHCE). Intrachain disulfides connect Cys-1200/Cys-1211, Cys-1205/Cys-1222, Cys-1240/Cys-1253, Cys-1247/Cys-1263, and Cys-1265/Cys-1278. The segment at 1266-1274 (RVGENWWYR) is hyaluronan-binding motif involved in chondroitin sulfate C-binding. The chain crosses the membrane as a helical span at residues 1290-1310 (IAIASVAGFLLVASAVIFFLA). The Cytoplasmic portion of the chain corresponds to 1311–1423 (RTLRDQYTKS…FVRQHQMKLL (113 aa)). Residues 1322–1327 (TEDSQG) are hyaluronan-binding motif involved in chondroitin sulfate C-binding.

In terms of processing, highly glycosylated (N- and O-linked carbohydrates). In terms of tissue distribution, expressed in retina.

It is found in the photoreceptor outer segment membrane. It localises to the photoreceptor inner segment membrane. The protein resides in the secreted. Its subcellular location is the extracellular space. The protein localises to the extracellular matrix. It is found in the interphotoreceptor matrix. In terms of biological role, chondroitin sulfate- and hyaluronan-binding proteoglycan involved in the organization of interphotoreceptor matrix. The protein is Interphotoreceptor matrix proteoglycan 2 (IMPG2) of Gallus gallus (Chicken).